We begin with the raw amino-acid sequence, 331 residues long: Probable tRNA pseudouridine synthase B (331 aa).

D66 functions as the Nucleophile in the catalytic mechanism. In terms of domain architecture, PUA spans 233–307 (INKIIVKDSA…NEEDNREKYK (75 aa)).

It belongs to the pseudouridine synthase TruB family. Type 2 subfamily.

It catalyses the reaction uridine(55) in tRNA = pseudouridine(55) in tRNA. Its function is as follows. Could be responsible for synthesis of pseudouridine from uracil-55 in the psi GC loop of transfer RNAs. This Methanococcus aeolicus (strain ATCC BAA-1280 / DSM 17508 / OCM 812 / Nankai-3) protein is Probable tRNA pseudouridine synthase B.